Here is a 317-residue protein sequence, read N- to C-terminus: Ubiquinone biosynthesis protein COQ9, mitochondrial (317 aa).

The N-terminal 46 residues, 1-46, are a transit peptide targeting the mitochondrion; sequence MAASVARVLKAAGGRQLLLMVARRRPVLRQPFLLMPRKFWGTSALR. The disordered stretch occupies residues 45 to 97; the sequence is LRSEDQKQPPFSSTSAHAGTPEHAEEQYQQQQPPPRYTDQAGEESEGYESEEQ. The span at 85-96 shows a compositional bias: acidic residues; that stretch reads AGEESEGYESEE. A 1,2-diacylglycero-3-phosphoethanolamine is bound at residue Arg243.

It belongs to the COQ9 family. In terms of assembly, homodimer. Heterodimer; two heterodimers of COQ7:COQ9 come together on the same side of the lipid pseudo-bilayer and form a curved tetramer with a hydrophobic surface suitable for membrane interaction. These two tetramers assemble into a soluble octamer with a pseudo-bilayer of lipids captured within. Interacts with COQ7; this interaction allows ubiquinone (CoQ) isoprene intermediates presentation to COQ7 and facilitates the COQ7-mediated hydroxylase step.

The protein localises to the mitochondrion. Its pathway is cofactor biosynthesis; ubiquinone biosynthesis. Membrane-associated protein that warps the membrane surface to access and bind aromatic isoprenes with high specificity, including ubiquinone (CoQ) isoprene intermediates and presents them directly to COQ7, therefore facilitating the COQ7-mediated hydroxylase step. Participates in the biosynthesis of coenzyme Q, also named ubiquinone, an essential lipid-soluble electron transporter for aerobic cellular respiration. This Xenopus tropicalis (Western clawed frog) protein is Ubiquinone biosynthesis protein COQ9, mitochondrial.